The chain runs to 142 residues: Large ribosomal subunit protein bL19 (142 aa).

The protein belongs to the bacterial ribosomal protein bL19 family.

In terms of biological role, this protein is located at the 30S-50S ribosomal subunit interface and may play a role in the structure and function of the aminoacyl-tRNA binding site. The sequence is that of Large ribosomal subunit protein bL19 from Rickettsia bellii (strain OSU 85-389).